The following is a 534-amino-acid chain: Arginine transporter 1 (534 aa).

Transmembrane regions (helical) follow at residues 35 to 55, 99 to 119, 126 to 146, 154 to 174, 182 to 202, and 216 to 236; these read YVLL…YFGW, SLFT…GYLL, AVAL…AFSG, PAFV…LLIV, ALIM…PLVL, and VCIG…FFFI. N-linked (GlcNAc...) asparagine glycosylation occurs at asparagine 246. Residues 261 to 302 form a disordered region; sequence TAQSSPKAVDSPPCDEGASSRGRLAVSHNTERTAPDDEQEKD. The segment covering 289–302 has biased composition (basic and acidic residues); sequence NTERTAPDDEQEKD. The next 6 membrane-spanning stretches (helical) occupy residues 329-349, 365-385, 388-408, 419-439, 451-471, and 483-503; these read AFTF…WVMA, YTLE…GVVI, IGIM…YVCV, FSVI…YVFV, LIGV…VLYG, and RPVV…LLAM.

Belongs to the SLC43A transporter (TC 2.A.1.44) family.

It is found in the cell membrane. It carries out the reaction L-arginine(in) = L-arginine(out). Functionally, selective L-arginine transporter that is essential for parasite survival and virulence. Does not require other inorganic ions such as sodium, chloride, potassium or calcium. The sequence is that of Arginine transporter 1 from Toxoplasma gondii (strain ATCC 50611 / Me49).